The chain runs to 298 residues: Glutamyl-Q tRNA(Asp) synthetase (298 aa).

Residues 9–13 (RFAPS) and glutamate 45 each bind L-glutamate. Positions 12-22 (PSPSGELHFGS) match the 'HIGH' region motif. Zn(2+)-binding residues include cysteine 101, cysteine 103, tyrosine 115, and cysteine 119. Tyrosine 172 and arginine 190 together coordinate L-glutamate. The short motif at 228 to 232 (KLSKQ) is the 'KMSKS' region element. Lysine 231 serves as a coordination point for ATP.

The protein belongs to the class-I aminoacyl-tRNA synthetase family. GluQ subfamily. It depends on Zn(2+) as a cofactor.

Catalyzes the tRNA-independent activation of glutamate in presence of ATP and the subsequent transfer of glutamate onto a tRNA(Asp). Glutamate is transferred on the 2-amino-5-(4,5-dihydroxy-2-cyclopenten-1-yl) moiety of the queuosine in the wobble position of the QUC anticodon. The protein is Glutamyl-Q tRNA(Asp) synthetase of Salmonella choleraesuis (strain SC-B67).